A 237-amino-acid polypeptide reads, in one-letter code: Ribosomal RNA small subunit methyltransferase G (237 aa).

Residues G78, F83, 129-130 (AE), and R148 each bind S-adenosyl-L-methionine.

It belongs to the methyltransferase superfamily. RNA methyltransferase RsmG family.

It is found in the cytoplasm. Functionally, specifically methylates the N7 position of a guanine in 16S rRNA. This chain is Ribosomal RNA small subunit methyltransferase G, found in Streptococcus thermophilus (strain ATCC BAA-491 / LMD-9).